Consider the following 194-residue polypeptide: tRNA (mnm(5)s(2)U34)-methyltransferase (194 aa).

The S-adenosyl-L-methionine site is built by His33, Asp34, Asp52, Gln54, Ser79, and His80.

Belongs to the methyltransferase superfamily. MnmM family. Homodimer.

The catalysed reaction is 5-aminomethyl-2-thiouridine(34) in tRNA + S-adenosyl-L-methionine = 5-methylaminomethyl-2-thiouridine(34) in tRNA + S-adenosyl-L-homocysteine + H(+). Its pathway is tRNA modification. Its function is as follows. Involved in the biosynthesis of 5-methylaminomethyl-2-thiouridine (mnm(5)s(2)U) at the wobble position (U34) in tRNA. Catalyzes the transfer of a methyl group from S-adenosyl-L-methionine to nm(5)s(2)U34 to form mnm(5)s(2)U34. The sequence is that of tRNA (mnm(5)s(2)U34)-methyltransferase from Bacillus subtilis (strain 168).